Here is a 261-residue protein sequence, read N- to C-terminus: WW domain-binding protein 2 (261 aa).

The 84-residue stretch at 1 to 84 (MALNKNHSEG…YLMKDCEIKQ (84 aa)) folds into the GRAM domain. Tyr-192 is subject to Phosphotyrosine. The PPxY motif 1 motif lies at 196 to 200 (PPPPY). Positions 196 to 209 (PPPPYPGPMEPPVS) are enriched in pro residues. The segment at 196 to 261 (PPPPYPGPME…YYPPEDKKTQ (66 aa)) is disordered. Residues 210-230 (GPSAPATPAAEAKAAEAAASA) are compositionally biased toward low complexity. Tyr-231 is subject to Phosphotyrosine. Residues 245–254 (SQPPPPPYYP) show a composition bias toward pro residues. The short motif at 248–252 (PPPPY) is the PPxY motif 2 element.

Binds to the WW domain of YAP1, WWP1 and WWP2. Interacts with NEDD4. Interacts with ESR1 and UBE3A. Post-translationally, phosphorylated in repsonse to EGF as well as estrogen and progesterone hormones. Tyr-192 and Tyr-231 are phosphorylated by YES and SRC inducing nuclear translocation. Expressed in the ear and the eye. Isoform 1 is expressed in brain, inner ear and organ of Corti. Isoform 2 is only detected in brain.

It is found in the cytoplasm. The protein resides in the nucleus. Functionally, acts as a transcriptional coactivator of estrogen and progesterone receptors (ESR1 and PGR) upon hormone activation. In presence of estrogen, binds to ESR1-responsive promoters. Synergizes with YAP1 to enhance PGR activity. Modulates expression of post-synaptic scaffolding proteins via regulation of ESR1, ESR2 and PGR. The polypeptide is WW domain-binding protein 2 (Wbp2) (Mus musculus (Mouse)).